We begin with the raw amino-acid sequence, 400 residues long: Acetate kinase (400 aa).

Residue N10 coordinates Mg(2+). K17 contributes to the ATP binding site. R91 provides a ligand contact to substrate. The Proton donor/acceptor role is filled by D150. Residues 210–214 (HLGNG), 285–287 (DCR), and 333–337 (GIGEN) each bind ATP. E387 is a Mg(2+) binding site.

This sequence belongs to the acetokinase family. In terms of assembly, homodimer. It depends on Mg(2+) as a cofactor. Requires Mn(2+) as cofactor.

The protein localises to the cytoplasm. It carries out the reaction acetate + ATP = acetyl phosphate + ADP. Its pathway is metabolic intermediate biosynthesis; acetyl-CoA biosynthesis; acetyl-CoA from acetate: step 1/2. Functionally, catalyzes the formation of acetyl phosphate from acetate and ATP. Can also catalyze the reverse reaction. The sequence is that of Acetate kinase from Yersinia pseudotuberculosis serotype IB (strain PB1/+).